We begin with the raw amino-acid sequence, 463 residues long: ATP synthase subunit beta (463 aa).

152–159 (GGAGVGKT) serves as a coordination point for ATP.

The protein belongs to the ATPase alpha/beta chains family. As to quaternary structure, F-type ATPases have 2 components, CF(1) - the catalytic core - and CF(0) - the membrane proton channel. CF(1) has five subunits: alpha(3), beta(3), gamma(1), delta(1), epsilon(1). CF(0) has three main subunits: a(1), b(2) and c(9-12). The alpha and beta chains form an alternating ring which encloses part of the gamma chain. CF(1) is attached to CF(0) by a central stalk formed by the gamma and epsilon chains, while a peripheral stalk is formed by the delta and b chains.

Its subcellular location is the cell inner membrane. The enzyme catalyses ATP + H2O + 4 H(+)(in) = ADP + phosphate + 5 H(+)(out). Its function is as follows. Produces ATP from ADP in the presence of a proton gradient across the membrane. The catalytic sites are hosted primarily by the beta subunits. This Shewanella sp. (strain ANA-3) protein is ATP synthase subunit beta.